The sequence spans 267 residues: Sulfate transporter CysZ (267 aa).

4 helical membrane passes run 29 to 49 (FVIM…WLFI), 73 to 93 (ILLI…FTTL), 149 to 169 (IILF…PIIV), and 212 to 232 (GLVM…PVAV).

It belongs to the CysZ family.

It localises to the cell inner membrane. High affinity, high specificity proton-dependent sulfate transporter, which mediates sulfate uptake. Provides the sulfur source for the cysteine synthesis pathway. The chain is Sulfate transporter CysZ from Pasteurella multocida (strain Pm70).